The chain runs to 393 residues: MQQTKKLTHSDITIAVMSGPFLQRGEPALVSKWYRTKMALACGVDLVVELPYAFSTQKAETFANGAISILNALHVSEICFGSEDGQIENFYNTVSAQKNEEETFNRLVKQFMNAGNSYAKATSEAFLHILSSEKNIDMSQPNNILGFQYIKAILMQNSSMQAQTIKRFASHYHDETFNDQHIASATCIRKQLFSENSSFTEIESFIPKATASLLASYKQNYGTLHNWEQYFSFFKYKLMTMSPEDLRHIYEIEEGLEHRILSKIQTSSSFHLFMEALKTKRYTWTRLQRACTHILTNTTKEEIHCANIEQHAPYIRLLGMSQKGQTYLSKNKKKIELPILTHTKTFDHPTLHIERKANSVYFSIMKEPLRTQLLKRDATHHPIRYDETTAKFL.

Residues glycine 81, asparagine 142, and arginine 167 each coordinate ATP.

The protein belongs to the TmcAL family.

It localises to the cytoplasm. It carries out the reaction cytidine(34) in elongator tRNA(Met) + acetate + ATP = N(4)-acetylcytidine(34) in elongator tRNA(Met) + AMP + diphosphate. Functionally, catalyzes the formation of N(4)-acetylcytidine (ac(4)C) at the wobble position of elongator tRNA(Met), using acetate and ATP as substrates. First activates an acetate ion to form acetyladenylate (Ac-AMP) and then transfers the acetyl group to tRNA to form ac(4)C34. This is tRNA(Met) cytidine acetate ligase from Bacillus cereus (strain 03BB102).